A 167-amino-acid chain; its full sequence is Crossover junction endodeoxyribonuclease RuvC (167 aa).

Catalysis depends on residues D11, E71, and D143. Mg(2+)-binding residues include D11, E71, and D143.

Belongs to the RuvC family. In terms of assembly, homodimer which binds Holliday junction (HJ) DNA. The HJ becomes 2-fold symmetrical on binding to RuvC with unstacked arms; it has a different conformation from HJ DNA in complex with RuvA. In the full resolvosome a probable DNA-RuvA(4)-RuvB(12)-RuvC(2) complex forms which resolves the HJ. Mg(2+) is required as a cofactor.

The protein resides in the cytoplasm. The enzyme catalyses Endonucleolytic cleavage at a junction such as a reciprocal single-stranded crossover between two homologous DNA duplexes (Holliday junction).. Its function is as follows. The RuvA-RuvB-RuvC complex processes Holliday junction (HJ) DNA during genetic recombination and DNA repair. Endonuclease that resolves HJ intermediates. Cleaves cruciform DNA by making single-stranded nicks across the HJ at symmetrical positions within the homologous arms, yielding a 5'-phosphate and a 3'-hydroxyl group; requires a central core of homology in the junction. The consensus cleavage sequence is 5'-(A/T)TT(C/G)-3'. Cleavage occurs on the 3'-side of the TT dinucleotide at the point of strand exchange. HJ branch migration catalyzed by RuvA-RuvB allows RuvC to scan DNA until it finds its consensus sequence, where it cleaves and resolves the cruciform DNA. The chain is Crossover junction endodeoxyribonuclease RuvC from Hyphomonas neptunium (strain ATCC 15444).